A 262-amino-acid polypeptide reads, in one-letter code: Hydroxyethylthiazole kinase (262 aa).

Residue Met39 coordinates substrate. 2 residues coordinate ATP: Lys115 and Thr160. Residue Gly187 participates in substrate binding.

This sequence belongs to the Thz kinase family. It depends on Mg(2+) as a cofactor.

It carries out the reaction 5-(2-hydroxyethyl)-4-methylthiazole + ATP = 4-methyl-5-(2-phosphooxyethyl)-thiazole + ADP + H(+). Its pathway is cofactor biosynthesis; thiamine diphosphate biosynthesis; 4-methyl-5-(2-phosphoethyl)-thiazole from 5-(2-hydroxyethyl)-4-methylthiazole: step 1/1. Functionally, catalyzes the phosphorylation of the hydroxyl group of 4-methyl-5-beta-hydroxyethylthiazole (THZ). This chain is Hydroxyethylthiazole kinase, found in Staphylococcus epidermidis (strain ATCC 35984 / DSM 28319 / BCRC 17069 / CCUG 31568 / BM 3577 / RP62A).